Reading from the N-terminus, the 282-residue chain is Dof zinc finger protein 4 (282 aa).

The Dof-type zinc finger occupies 45 to 99 (VKCPRCESTNTKFCYYNNYNLSQPRHFCKSCRRYWTKGGVLRNVPVGGGCRKTKR). Zn(2+) is bound by residues cysteine 47, cysteine 50, cysteine 72, and cysteine 75. Residues 89 to 161 (PVGGGCRKTK…TTPATPSSNT (73 aa)) form a disordered region. Low complexity-rich tracts occupy residues 102–117 (SSSAASSAPSTPTAAT) and 125–161 (RASASSPRSSSGGSGNTSPTAAAATTPTTPATPSSNT).

The protein resides in the nucleus. Functionally, transcription factor that may transactivate seed storage protein genes in developing seeds. In Oryza sativa subsp. japonica (Rice), this protein is Dof zinc finger protein 4.